A 1729-amino-acid chain; its full sequence is Cullin-7 (1729 aa).

Positions 350-388 (DRPRSSARSPGSIFQPQLADVSPGLPATQAQPSFRRSRH) are disordered. Serine 371 carries the post-translational modification Phosphoserine. Residues 392–465 (RSEFASGNTY…HWHMLEILGF (74 aa)) enclose the CPH domain. Residues 632–642 (SEDAAKVEAKE) show a composition bias toward basic and acidic residues. Residues 632-654 (SEDAAKVEAKEPPSQSPNTPLQR) are disordered. Residues 845-1024 (PINIPFFDVF…HTRLFYMVRA (180 aa)) enclose the DOC domain. The tract at residues 1373–1405 (VGHGASGKEHKSEKEEEAGAAAAVDVAEGEEEE) is disordered. A Glycyl lysine isopeptide (Lys-Gly) (interchain with G-Cter in NEDD8) cross-link involves residue lysine 1607.

It belongs to the cullin family. In terms of assembly, component of the 3M complex, composed of core components CUL7, CCDC8 and OBSL1. Component of the Cul7-RING(FBXW8) complex consisting of CUL7, RBX1, SKP1 and FBXW8. Within the Cul7-RING(FBXW8) complex interacts with FBXW8 and RBX1, but not with SKP1. Interacts with CUL1 (via the C-terminal domain); the interaction seems to be mediated by FBXW8; it is likely specific to FBXW8, but not other F-box proteins. Interacts (via the CPH domain) with p53/TP53; the interaction preferentially involves tetrameric and dimeric p53/TP53; this interaction recruits p53/TP53 for ubiquitination by neddylated CUL1-RBX1. The CUL7-CUL9 heterodimer seems to interact specifically with p53/TP53. Interacts with FBXW8; interaction is mutually exclusive of binding to CUL9 or p53/TP53. Interacts with CUL9; leading to inhibited CUL9 activity. Interacts with OBSL1. Interacts (as part of the 3M complex) with HDAC4 and HDAC5; it is negatively regulated by ANKRA2.

Its subcellular location is the cytoplasm. The protein resides in the cytoskeleton. It is found in the microtubule organizing center. The protein localises to the centrosome. It localises to the perinuclear region. Its subcellular location is the golgi apparatus. Its pathway is protein modification; protein ubiquitination. Core component of the 3M and Cul7-RING(FBXW8) complexes, which mediate the ubiquitination and subsequent proteasomal degradation of target proteins. Core component of the 3M complex, a complex required to regulate microtubule dynamics and genome integrity. It is unclear how the 3M complex regulates microtubules, it could act by controlling the level of a microtubule stabilizer. The Cul7-RING(FBXW8) complex alone lacks ubiquitination activity and does not promote polyubiquitination and proteasomal degradation of p53/TP53. However it mediates recruitment of p53/TP53 for ubiquitination by neddylated CUL1-RBX1. Interaction with CUL9 is required to inhibit CUL9 activity and ubiquitination of BIRC5. The Cul7-RING(FBXW8) complex also mediates ubiquitination and consequent degradation of target proteins such as GORASP1, IRS1 and MAP4K1/HPK1. Ubiquitination of GORASP1 regulates Golgi morphogenesis and dendrite patterning in brain. Mediates ubiquitination and degradation of IRS1 in a mTOR-dependent manner: the Cul7-RING(FBXW8) complex recognizes and binds IRS1 previously phosphorylated by S6 kinase (RPS6KB1 or RPS6KB2). The Cul7-RING(FBXW8) complex also mediates ubiquitination of MAP4K1/HPK1: recognizes and binds autophosphorylated MAP4K1/HPK1, leading to its degradation, thereby affecting cell proliferation and differentiation. Acts as a regulator in trophoblast cell epithelial-mesenchymal transition and placental development. While the Cul7-RING(FBXW8) and the 3M complexes are associated and involved in common processes, CUL7 and the Cul7-RING(FBXW8) complex may have additional functions. Probably plays a role in the degradation of proteins involved in endothelial proliferation and/or differentiation. The chain is Cullin-7 (CUL7) from Pongo abelii (Sumatran orangutan).